A 291-amino-acid polypeptide reads, in one-letter code: Pituitary-specific positive transcription factor 1 (291 aa).

The 9aaTAD signature appears at 5–13 (PFTSTDTFI). A POU-specific domain is found at 124–198 (MDSPEIRELE…ILFKWLEEAE (75 aa)). Residues 214–273 (KRKRRTTISIAAKDALERHFGEQNKPSSQEILRMAEELNLEKEVVRVWFCNRRQREKRVK) constitute a DNA-binding region (homeobox).

The protein belongs to the POU transcription factor family. Class-1 subfamily. In terms of assembly, interacts with PITX1. Interacts with LHX3. Interacts with ELK1.

It is found in the nucleus. In terms of biological role, transcription factor involved in the specification of the lactotrope, somatotrope, and thyrotrope phenotypes in the developing anterior pituitary. Activates growth hormone and prolactin genes. Specifically binds to the consensus sequence 5'-TAAAT-3'. This chain is Pituitary-specific positive transcription factor 1 (POU1F1), found in Ovis aries (Sheep).